The following is a 164-amino-acid chain: Ribosome maturation factor RimM (164 aa).

Residues 93–164 (DSEYYVANLN…FVVIVPPEFI (72 aa)) form the PRC barrel domain.

It belongs to the RimM family. In terms of assembly, binds ribosomal protein uS19.

The protein localises to the cytoplasm. An accessory protein needed during the final step in the assembly of 30S ribosomal subunit, possibly for assembly of the head region. Essential for efficient processing of 16S rRNA. May be needed both before and after RbfA during the maturation of 16S rRNA. It has affinity for free ribosomal 30S subunits but not for 70S ribosomes. The sequence is that of Ribosome maturation factor RimM from Orientia tsutsugamushi (strain Boryong) (Rickettsia tsutsugamushi).